A 205-amino-acid chain; its full sequence is Regulator of G-protein signaling 4 (205 aa).

3 S-palmitoyl cysteine lipidation sites follow: Cys2, Cys12, and Cys95. An RGS domain is found at 62-178; sequence SLENLINHEC…LKSRFYLDLT (117 aa).

Either Cys-2 or Cys-12 or both are palmitoylated. In terms of processing, phosphorylated by cyclic GMP-dependent protein kinase.

In terms of biological role, inhibits signal transduction by increasing the GTPase activity of G protein alpha subunits thereby driving them into their inactive GDP-bound form. Activity on G(z)-alpha is inhibited by phosphorylation of the G-protein. Activity on G(z)-alpha and G(i)-alpha-1 is inhibited by palmitoylation of the G-protein. The polypeptide is Regulator of G-protein signaling 4 (Rgs4) (Rattus norvegicus (Rat)).